The primary structure comprises 341 residues: Homeobox protein mls-2 (341 aa).

2 disordered regions span residues 1-78 (MPTS…DSTN) and 139-209 (SNPD…TVFS). The segment covering 64 to 78 (TTQSSPSASSEDSTN) has biased composition (polar residues). The segment covering 153-166 (KDEKSEGKDGETRD) has biased composition (basic and acidic residues). The segment at residues 201–260 (KKKTRTVFSRSQVSQLEMMFECKRYLSSQERSNLAQKLHLTETQVKIWFQNRRNKFKRQA) is a DNA-binding region (homeobox).

The protein belongs to the HMX homeobox family. Expressed in a subset of head neurons, including AIM and ASK (at protein level).

The protein resides in the nucleus. Transcription factor that binds to the promoter of target genes. Regulates fate specification and/or differentiation of multiple cell types arising from the embryonic mesodermal (M) lineage and the ABp(l/r)paa precursors. In the postembryonic M lineage, regulates cleavage orientation, cell proliferation and cell fate specification. Regulates hlh-1 expression to specify coelomocyte fate in the mesodermal (M) lineage. In AWC neurons, initiates expression of ceh-36, leading to the expression of terminal differentiation genes. Regulates ventral cephalic sheath (CEPsh) glia differentiation and expression of transcription factor hlh-17 in CEPsh glia. Promotes terminal differentiation and morphogenesis of the epithelial duct and pore cells. In the duct cell, cooperates with the EGF-Ras-ERK pathway in turning on the terminal differentiation gene lin-48. This is Homeobox protein mls-2 from Caenorhabditis elegans.